We begin with the raw amino-acid sequence, 461 residues long: Dihydrofolate reductase (461 aa).

One can recognise a DHFR domain in the interval 233–447 (DLTMIVAVSS…VEIEFELYGK (215 aa)). Residues A239 and 246–252 (GIGKKNS) each bind NADP(+). 260 to 265 (EMAYFA) serves as a coordination point for substrate. 292–294 (RSC) is a binding site for NADP(+). R308 provides a ligand contact to substrate. Residues 314–316 (TRN) and 365–372 (GGSFLYGS) each bind NADP(+).

The protein belongs to the dihydrofolate reductase family.

The catalysed reaction is (6S)-5,6,7,8-tetrahydrofolate + NADP(+) = 7,8-dihydrofolate + NADPH + H(+). The protein operates within cofactor biosynthesis; tetrahydrofolate biosynthesis; 5,6,7,8-tetrahydrofolate from 7,8-dihydrofolate: step 1/1. In terms of biological role, key enzyme in folate metabolism. Catalyzes an essential reaction for de novo glycine and purine synthesis, and for DNA precursor synthesis. This Schizosaccharomyces pombe (strain 972 / ATCC 24843) (Fission yeast) protein is Dihydrofolate reductase (dfr1).